The following is a 218-amino-acid chain: ADP-sugar pyrophosphatase (218 aa).

Met-1 carries the post-translational modification N-acetylmethionine. Ser-10 is modified (phosphoserine). Residue Trp-27 coordinates substrate. A Glycyl lysine isopeptide (Lys-Gly) (interchain with G-Cter in SUMO2) cross-link involves residue Lys-41. Residue Thr-44 is modified to Phosphothreonine. Residues 45-46 and Arg-83 each bind substrate; that span reads WE. The region spanning 56-196 is the Nudix hydrolase domain; sequence KSADAVSVIP…EQHLTVDAKV (141 aa). Ala-95 contacts Mg(2+). Positions 96–117 match the Nudix box motif; the sequence is GFIEDGESPEAAALRELEEETG. Phe-97 is a substrate binding site. Residues Glu-111 and Glu-115 each contribute to the Mg(2+) site. A substrate-binding site is contributed by Asp-132. Mg(2+) is bound at residue Glu-165. Residues Lys-209 and Lys-217 each carry the N6-acetyllysine modification.

This sequence belongs to the Nudix hydrolase family. In terms of assembly, homodimer. Interacts with PARG. The cofactor is Mg(2+). Post-translationally, phosphorylation at Thr-44 is required for homodimer stability; dephosphorylation results in destabilization of the homodimer. Dephosphorylation at Thr-44 promotes the ATP-synthesis activity. Widely expressed. Most abundant in liver.

It is found in the nucleus. It carries out the reaction D-ribose 5-phosphate + ATP + H(+) = ADP-D-ribose + diphosphate. The enzyme catalyses ADP-D-ribose + H2O = D-ribose 5-phosphate + AMP + 2 H(+). The catalysed reaction is 8-oxo-dGDP + H2O = 8-oxo-dGMP + phosphate + H(+). Its function is as follows. Enzyme that can either act as an ADP-sugar pyrophosphatase in absence of diphosphate or catalyze the synthesis of ATP in presence of diphosphate. In absence of diphosphate, hydrolyzes with similar activities various modified nucleoside diphosphates such as ADP-ribose, ADP-mannose, ADP-glucose, 8-oxo-GDP and 8-oxo-dGDP. Can also hydrolyze other nucleotide sugars with low activity. In presence of diphosphate, mediates the synthesis of ATP in the nucleus by catalyzing the conversion of ADP-ribose to ATP and ribose 5-phosphate. Nuclear ATP synthesis takes place when dephosphorylated at Thr-44. Nuclear ATP generation is required for extensive chromatin remodeling events that are energy-consuming. Does not play a role in U8 snoRNA decapping activity. Binds U8 snoRNA. The chain is ADP-sugar pyrophosphatase from Mus musculus (Mouse).